The sequence spans 67 residues: DNA-directed RNA polymerases I, II, and III subunit RPABC5 (67 aa).

Zn(2+)-binding residues include Cys-7, Cys-10, Cys-44, and Cys-45.

This sequence belongs to the archaeal Rpo10/eukaryotic RPB10 RNA polymerase subunit family. In terms of assembly, component of the RNA polymerase I (Pol I), RNA polymerase II (Pol II) and RNA polymerase III (Pol III) complexes consisting of at least 13, 12 and 17 subunits, respectively.

It localises to the nucleus. In terms of biological role, DNA-dependent RNA polymerase catalyzes the transcription of DNA into RNA using the four ribonucleoside triphosphates as substrates. Common component of RNA polymerases I, II and III which synthesize ribosomal RNA precursors, mRNA precursors and many functional non-coding RNAs, and a small RNAs, such as 5S rRNA and tRNAs, respectively. Pol II is the central component of the basal RNA polymerase II transcription machinery. Pols are composed of mobile elements that move relative to each other. In Pol II, RBP10 is part of the core element with the central large cleft. The polypeptide is DNA-directed RNA polymerases I, II, and III subunit RPABC5 (Caenorhabditis briggsae).